A 278-amino-acid chain; its full sequence is HTH-type transcriptional regulator ExsA (278 aa).

Residues 171 to 269 (ERLQLFMEKH…GCTPSRSRQG (99 aa)) enclose the HTH araC/xylS-type domain. DNA-binding regions (H-T-H motif) lie at residues 188–209 (SDFSREFGMGLTTFKELFGSVY) and 236–259 (IVDIAMEAGFSSQSYFTQSYRRRF).

In terms of assembly, homodimer. Interacts with ExsD; this interaction inhibits ExsA activity.

Its activity is regulated as follows. In the absence of inducing signals such as low Ca(2+) or host cell contact, the T3SS/injectisome is expressed at a low basal level and exists in a quiescent state due to ExsA sequestration by ExsD in a 1:1 complex. Upon host cell contact, this interaction is disrupted by the anti-antiactivator protein ExsC leading to ExsA activation. Functionally, transcriptional regulator that plays an essential role in the activation the type III secretion system (T3SS) operons. In addition, ExsA directly regulates the transcription of ImpA virulence factor that cooperatively inhibits the functions of host macrophages together with the T3SS. The protein is HTH-type transcriptional regulator ExsA (exsA) of Pseudomonas aeruginosa (strain ATCC 15692 / DSM 22644 / CIP 104116 / JCM 14847 / LMG 12228 / 1C / PRS 101 / PAO1).